The chain runs to 288 residues: Energy-coupling factor transporter ATP-binding protein EcfA2 (288 aa).

Residues 3–245 (IIVKNLTHIY…NASKLKDIGL (243 aa)) form the ABC transporter domain. 40-47 (GHTGSGKS) is an ATP binding site.

It belongs to the ABC transporter superfamily. Energy-coupling factor EcfA family. Forms a stable energy-coupling factor (ECF) transporter complex composed of 2 membrane-embedded substrate-binding proteins (S component), 2 ATP-binding proteins (A component) and 2 transmembrane proteins (T component).

Its subcellular location is the cell membrane. In terms of biological role, ATP-binding (A) component of a common energy-coupling factor (ECF) ABC-transporter complex. Unlike classic ABC transporters this ECF transporter provides the energy necessary to transport a number of different substrates. The polypeptide is Energy-coupling factor transporter ATP-binding protein EcfA2 (Clostridioides difficile (strain 630) (Peptoclostridium difficile)).